A 277-amino-acid polypeptide reads, in one-letter code: Putative phosphoenolpyruvate synthase regulatory protein (277 aa).

157 to 164 (GVSRSGKT) serves as a coordination point for ADP.

Belongs to the pyruvate, phosphate/water dikinase regulatory protein family. PSRP subfamily.

It carries out the reaction [pyruvate, water dikinase] + ADP = [pyruvate, water dikinase]-phosphate + AMP + H(+). It catalyses the reaction [pyruvate, water dikinase]-phosphate + phosphate + H(+) = [pyruvate, water dikinase] + diphosphate. Its function is as follows. Bifunctional serine/threonine kinase and phosphorylase involved in the regulation of the phosphoenolpyruvate synthase (PEPS) by catalyzing its phosphorylation/dephosphorylation. This is Putative phosphoenolpyruvate synthase regulatory protein from Vibrio vulnificus (strain CMCP6).